The sequence spans 339 residues: UDP-N-acetylglucosamine--N-acetylmuramyl-(pentapeptide) pyrophosphoryl-undecaprenol N-acetylglucosamine transferase (339 aa).

UDP-N-acetyl-alpha-D-glucosamine-binding positions include Thr-11–Gly-13, Asn-127, Arg-170, Ser-188, Ile-235, and Gln-280.

This sequence belongs to the glycosyltransferase 28 family. MurG subfamily.

It localises to the cell inner membrane. The enzyme catalyses di-trans,octa-cis-undecaprenyl diphospho-N-acetyl-alpha-D-muramoyl-L-alanyl-D-glutamyl-meso-2,6-diaminopimeloyl-D-alanyl-D-alanine + UDP-N-acetyl-alpha-D-glucosamine = di-trans,octa-cis-undecaprenyl diphospho-[N-acetyl-alpha-D-glucosaminyl-(1-&gt;4)]-N-acetyl-alpha-D-muramoyl-L-alanyl-D-glutamyl-meso-2,6-diaminopimeloyl-D-alanyl-D-alanine + UDP + H(+). Its pathway is cell wall biogenesis; peptidoglycan biosynthesis. Cell wall formation. Catalyzes the transfer of a GlcNAc subunit on undecaprenyl-pyrophosphoryl-MurNAc-pentapeptide (lipid intermediate I) to form undecaprenyl-pyrophosphoryl-MurNAc-(pentapeptide)GlcNAc (lipid intermediate II). The polypeptide is UDP-N-acetylglucosamine--N-acetylmuramyl-(pentapeptide) pyrophosphoryl-undecaprenol N-acetylglucosamine transferase (Thermotoga sp. (strain RQ2)).